Here is a 797-residue protein sequence, read N- to C-terminus: G-type lectin S-receptor-like serine/threonine-protein kinase SD2-2 (797 aa).

An N-terminal signal peptide occupies residues 1–23 (MPCTTYLPLLLLLFLLPPPSVQS). Positions 24 to 139 (KVIIKGNQTI…DGSPVWQSFD (116 aa)) constitute a Bulb-type lectin domain. Topologically, residues 24 to 401 (KVIIKGNQTI…KNSKGNISKS (378 aa)) are extracellular. 4 N-linked (GlcNAc...) asparagine glycosylation sites follow: asparagine 30, asparagine 49, asparagine 150, and asparagine 197. One can recognise an EGF-like; atypical domain in the interval 274-310 (PEDPCRVYNLCGQLGFCSSELLKPCACIRGFRPRNDA). 4 disulfides stabilise this stretch: cysteine 278–cysteine 290, cysteine 284–cysteine 298, cysteine 359–cysteine 381, and cysteine 363–cysteine 369. The PAN domain maps to 321–407 (CRRENGDSGE…ISKSIIILCS (87 aa)). N-linked (GlcNAc...) asparagine glycosylation is found at asparagine 366 and asparagine 397. Residues 402-422 (IIILCSVVGSISVLGFTLLVP) form a helical membrane-spanning segment. Topologically, residues 423-797 (LILLKRSRKR…SRSSFGRPSP (375 aa)) are cytoplasmic. The 282-residue stretch at 461–742 (NGFSDKVGHG…TVVKMLEGVV (282 aa)) folds into the Protein kinase domain. ATP-binding positions include 467–475 (VGHGGFGAV) and lysine 490. Residues 550 to 566 (SPKLLSWETRFRIALGT) form a caM-binding region. Aspartate 585 (proton acceptor) is an active-site residue. The segment at 767-797 (GTSCSEGHGCSDLNTGLSSPGSRSSFGRPSP) is disordered. A compositionally biased stretch (low complexity) spans 784-797 (SSPGSRSSFGRPSP).

The protein belongs to the protein kinase superfamily. Ser/Thr protein kinase family. In terms of processing, autophosphorylated. In terms of tissue distribution, expressed in the shoot apex and roots, specifically in lateral roots and at the root-hypocotyl transition zone.

The protein localises to the cell membrane. The enzyme catalyses L-seryl-[protein] + ATP = O-phospho-L-seryl-[protein] + ADP + H(+). The catalysed reaction is L-threonyl-[protein] + ATP = O-phospho-L-threonyl-[protein] + ADP + H(+). Serine/threonine-protein kinase. The polypeptide is G-type lectin S-receptor-like serine/threonine-protein kinase SD2-2 (SD22) (Arabidopsis thaliana (Mouse-ear cress)).